A 506-amino-acid chain; its full sequence is Maturase K (506 aa).

Belongs to the intron maturase 2 family. MatK subfamily.

It is found in the plastid. Its subcellular location is the chloroplast. Functionally, usually encoded in the trnK tRNA gene intron. Probably assists in splicing its own and other chloroplast group II introns. This Hydrangea macrophylla (Bigleaf hydrangea) protein is Maturase K.